Reading from the N-terminus, the 196-residue chain is Phosphoheptose isomerase (196 aa).

The region spanning 34–196 (MVQCLLGGKK…DRTLFPQDEA (163 aa)) is the SIS domain. Residue 49–51 (NGG) coordinates substrate. 2 residues coordinate Zn(2+): H58 and E62. Residues E62, 91-92 (ND), 117-119 (STS), S122, and Q172 each bind substrate. Zn(2+) is bound by residues Q172 and H180.

The protein belongs to the SIS family. GmhA subfamily. As to quaternary structure, homotetramer. Zn(2+) is required as a cofactor.

The protein resides in the cytoplasm. The enzyme catalyses 2 D-sedoheptulose 7-phosphate = D-glycero-alpha-D-manno-heptose 7-phosphate + D-glycero-beta-D-manno-heptose 7-phosphate. It participates in carbohydrate biosynthesis; D-glycero-D-manno-heptose 7-phosphate biosynthesis; D-glycero-alpha-D-manno-heptose 7-phosphate and D-glycero-beta-D-manno-heptose 7-phosphate from sedoheptulose 7-phosphate: step 1/1. In terms of biological role, catalyzes the isomerization of sedoheptulose 7-phosphate in D-glycero-D-manno-heptose 7-phosphate. The sequence is that of Phosphoheptose isomerase from Shewanella denitrificans (strain OS217 / ATCC BAA-1090 / DSM 15013).